Here is a 209-residue protein sequence, read N- to C-terminus: Large ribosomal subunit protein uL3 (209 aa).

The segment at 127–153 (NASRGPMSHGSKFHRAPGSMGAASDPS) is disordered.

It belongs to the universal ribosomal protein uL3 family. In terms of assembly, part of the 50S ribosomal subunit. Forms a cluster with proteins L14 and L19.

Functionally, one of the primary rRNA binding proteins, it binds directly near the 3'-end of the 23S rRNA, where it nucleates assembly of the 50S subunit. The sequence is that of Large ribosomal subunit protein uL3 from Clostridium perfringens (strain SM101 / Type A).